A 415-amino-acid chain; its full sequence is Serine hydroxymethyltransferase (415 aa).

(6S)-5,6,7,8-tetrahydrofolate contacts are provided by residues Leu-121 and 125 to 127 (GHL). Lys-230 carries the N6-(pyridoxal phosphate)lysine modification. 355 to 357 (SPF) contributes to the (6S)-5,6,7,8-tetrahydrofolate binding site.

It belongs to the SHMT family. As to quaternary structure, homodimer. The cofactor is pyridoxal 5'-phosphate.

It is found in the cytoplasm. The enzyme catalyses (6R)-5,10-methylene-5,6,7,8-tetrahydrofolate + glycine + H2O = (6S)-5,6,7,8-tetrahydrofolate + L-serine. It functions in the pathway one-carbon metabolism; tetrahydrofolate interconversion. The protein operates within amino-acid biosynthesis; glycine biosynthesis; glycine from L-serine: step 1/1. Functionally, catalyzes the reversible interconversion of serine and glycine with tetrahydrofolate (THF) serving as the one-carbon carrier. This reaction serves as the major source of one-carbon groups required for the biosynthesis of purines, thymidylate, methionine, and other important biomolecules. Also exhibits THF-independent aldolase activity toward beta-hydroxyamino acids, producing glycine and aldehydes, via a retro-aldol mechanism. The chain is Serine hydroxymethyltransferase from Lactococcus lactis subsp. cremoris (strain SK11).